The following is a 398-amino-acid chain: Phosphoglycerate kinase (398 aa).

Residues 21–23, arginine 36, 59–62, arginine 119, and arginine 157 contribute to the substrate site; these read DFN and HLGR. Residues lysine 208, glycine 296, glutamate 327, and 354–357 each bind ATP; that span reads GGDS.

The protein belongs to the phosphoglycerate kinase family. As to quaternary structure, monomer.

The protein localises to the cytoplasm. The enzyme catalyses (2R)-3-phosphoglycerate + ATP = (2R)-3-phospho-glyceroyl phosphate + ADP. Its pathway is carbohydrate degradation; glycolysis; pyruvate from D-glyceraldehyde 3-phosphate: step 2/5. This chain is Phosphoglycerate kinase, found in Lactococcus lactis subsp. cremoris (strain MG1363).